The primary structure comprises 675 residues: Acetyl-coenzyme A synthetase 2 (675 aa).

CoA is bound by residues 206 to 209 (RGGK) and Thr-325. Residues 401 to 403 (GEP), 425 to 430 (DTMWQT), Asp-516, and Arg-531 each bind ATP. Ser-539 is a CoA binding site. Arg-542 is a binding site for ATP. Arg-604 serves as a coordination point for CoA.

This sequence belongs to the ATP-dependent AMP-binding enzyme family.

It catalyses the reaction acetate + ATP + CoA = acetyl-CoA + AMP + diphosphate. The sequence is that of Acetyl-coenzyme A synthetase 2 (ACS2) from Zygosaccharomyces bailii.